The following is a 346-amino-acid chain: 36.4 kDa proline-rich protein (346 aa).

The tract at residues 11–144 (PYPPSTPKHP…PFTPKPPSPI (134 aa)) is disordered. Pro residues-rich tracts occupy residues 25-42 (KVKP…PSTP), 51-81 (VKPP…PSTP), and 89-144 (QKPC…PSPI).

This is 36.4 kDa proline-rich protein (TPRP-F1) from Solanum lycopersicum (Tomato).